A 181-amino-acid chain; its full sequence is Adenylate kinase (181 aa).

7–15 provides a ligand contact to ATP; the sequence is GVAGVGKTT.

This sequence belongs to the archaeal adenylate kinase family.

Its subcellular location is the cytoplasm. It carries out the reaction AMP + ATP = 2 ADP. This chain is Adenylate kinase (adkA), found in Thermoplasma volcanium (strain ATCC 51530 / DSM 4299 / JCM 9571 / NBRC 15438 / GSS1).